The primary structure comprises 128 residues: Kinase-associated lipoprotein B (128 aa).

The signal sequence occupies residues 1 to 25 (MSTFETGSIVKGFYKTGVYIGEITA). Cys-26 carries the N-palmitoyl cysteine lipid modification. Cys-26 carries the S-diacylglycerol cysteine lipid modification.

Its subcellular location is the cell membrane. In terms of biological role, may play a role in the activation or the expression of KinB. The protein is Kinase-associated lipoprotein B (kapB) of Bacillus subtilis (strain 168).